The chain runs to 317 residues: Melanocyte-stimulating hormone receptor (317 aa).

Over 1 to 37 (MPVQGSQRRLLGSLNSTPTATPHLGLAANQTGARCLE) the chain is Extracellular. A glycan (N-linked (GlcNAc...) asparagine) is linked at Asn-29. The chain crosses the membrane as a helical span at residues 38-63 (VSVPDGLFLSLGLVSLVENVLVVTAI). Residues 64–72 (AKNRNLHSP) lie on the Cytoplasmic side of the membrane. Residues 73 to 93 (MYCFICCLALSDLLVSGSNML) traverse the membrane as a helical segment. The Extracellular portion of the chain corresponds to 94-118 (ETAVTLLLEAGALAARAAVVQQLDN). The chain crosses the membrane as a helical span at residues 119–140 (VIDVITCSSMLSSLCFLGAIAV). Residues 141–163 (DRYISIFYALRYHSIVTLPRARR) lie on the Cytoplasmic side of the membrane. A helical transmembrane segment spans residues 164-183 (AVAAIWVASVLCSTLFIAYY). The Extracellular segment spans residues 184–191 (DHAAVLLC). A helical transmembrane segment spans residues 192-211 (LVVFFLAMLVLMAVLYVHML). Residues 212–240 (ARACQHAQGIARLHKRQRLAHQGFGLKGA) are Cytoplasmic-facing. A helical transmembrane segment spans residues 241–266 (ATLTILLGIFFLCWGPFFLHLTLIVL). Topologically, residues 267–279 (CPQHPTCSCIFKN) are extracellular. A helical membrane pass occupies residues 280–300 (FNLFLALIICNAIIDPLIYAF). The Cytoplasmic portion of the chain corresponds to 301-317 (RSQELRRTLKEVLLCSW). Residue Cys-315 is the site of S-palmitoyl cysteine attachment.

It belongs to the G-protein coupled receptor 1 family. In terms of assembly, interacts with MGRN1, but does not undergo MGRN1-mediated ubiquitination; this interaction competes with GNAS-binding and thus inhibits agonist-induced cAMP production. Interacts with OPN3; the interaction results in a decrease in MC1R-mediated cAMP signaling and ultimately a decrease in melanin production in melanocytes.

It is found in the cell membrane. Its function is as follows. Receptor for MSH (alpha, beta and gamma) and ACTH. The activity of this receptor is mediated by G proteins which activate adenylate cyclase. Mediates melanogenesis, the production of eumelanin (black/brown) and phaeomelanin (red/yellow), via regulation of cAMP signaling in melanocytes. In Macaca sylvanus (Barbary macaque), this protein is Melanocyte-stimulating hormone receptor (MC1R).